Consider the following 470-residue polypeptide: tRNA-2-methylthio-N(6)-dimethylallyladenosine synthase (470 aa).

The MTTase N-terminal domain occupies 5-122; it reads RKLYVKSFGC…LPELLAEAKA (118 aa). Residues Cys-14, Cys-50, Cys-85, Cys-163, Cys-167, and Cys-170 each coordinate [4Fe-4S] cluster. The Radical SAM core domain maps to 149-383; sequence RSRGPAAFVT…LLEASKAAFD (235 aa). Positions 384–446 constitute a TRAM domain; that stretch reads ESCRGRTFDI…PNSLAGVPAE (63 aa). The segment at 439–470 is disordered; sequence SLAGVPAEASEPSVSQSPVSSARSRPLAAMEA. The span at 444 to 464 shows a compositional bias: low complexity; the sequence is PAEASEPSVSQSPVSSARSRP.

Belongs to the methylthiotransferase family. MiaB subfamily. In terms of assembly, monomer. [4Fe-4S] cluster serves as cofactor.

The protein localises to the cytoplasm. The catalysed reaction is N(6)-dimethylallyladenosine(37) in tRNA + (sulfur carrier)-SH + AH2 + 2 S-adenosyl-L-methionine = 2-methylsulfanyl-N(6)-dimethylallyladenosine(37) in tRNA + (sulfur carrier)-H + 5'-deoxyadenosine + L-methionine + A + S-adenosyl-L-homocysteine + 2 H(+). Its function is as follows. Catalyzes the methylthiolation of N6-(dimethylallyl)adenosine (i(6)A), leading to the formation of 2-methylthio-N6-(dimethylallyl)adenosine (ms(2)i(6)A) at position 37 in tRNAs that read codons beginning with uridine. This chain is tRNA-2-methylthio-N(6)-dimethylallyladenosine synthase, found in Xanthobacter autotrophicus (strain ATCC BAA-1158 / Py2).